Consider the following 81-residue polypeptide: YcgL domain-containing protein Tgr7_3126 (81 aa).

The 81-residue stretch at 1–81 folds into the YcgL domain; that stretch reads MQVYVYKSRR…QMPPQNERPL (81 aa).

The polypeptide is YcgL domain-containing protein Tgr7_3126 (Thioalkalivibrio sulfidiphilus (strain HL-EbGR7)).